Consider the following 473-residue polypeptide: Photosystem II CP43 reaction center protein (473 aa).

The propeptide occupies 1–14 (MKTLYSLRRFYHVE). N-acetylthreonine is present on threonine 15. Threonine 15 carries the post-translational modification Phosphothreonine. Transmembrane regions (helical) follow at residues 69–93 (LFEV…PHLA), 134–155 (LLGP…KDRN), 178–200 (KALY…RKIT), 255–275 (KPFA…LSYS), and 291–312 (WFNN…ASQA). Residue glutamate 367 participates in [CaMn4O5] cluster binding. Residues 447–471 (RARAAAAGFEKGIDRDLEPVLFMTP) form a helical membrane-spanning segment.

The protein belongs to the PsbB/PsbC family. PsbC subfamily. PSII is composed of 1 copy each of membrane proteins PsbA, PsbB, PsbC, PsbD, PsbE, PsbF, PsbH, PsbI, PsbJ, PsbK, PsbL, PsbM, PsbT, PsbX, PsbY, PsbZ, Psb30/Ycf12, at least 3 peripheral proteins of the oxygen-evolving complex and a large number of cofactors. It forms dimeric complexes. It depends on Binds multiple chlorophylls and provides some of the ligands for the Ca-4Mn-5O cluster of the oxygen-evolving complex. It may also provide a ligand for a Cl- that is required for oxygen evolution. PSII binds additional chlorophylls, carotenoids and specific lipids. as a cofactor.

It is found in the plastid. Its subcellular location is the chloroplast thylakoid membrane. In terms of biological role, one of the components of the core complex of photosystem II (PSII). It binds chlorophyll and helps catalyze the primary light-induced photochemical processes of PSII. PSII is a light-driven water:plastoquinone oxidoreductase, using light energy to abstract electrons from H(2)O, generating O(2) and a proton gradient subsequently used for ATP formation. The polypeptide is Photosystem II CP43 reaction center protein (Carica papaya (Papaya)).